The primary structure comprises 42 residues: Cytochrome b6-f complex subunit 7 (42 aa).

Residues 19 to 37 form a helical membrane-spanning segment; the sequence is AVVCFSMTLFGLSLGFGLL.

This sequence belongs to the PetM family. As to quaternary structure, the 4 large subunits of the cytochrome b6-f complex are cytochrome b6, subunit IV (17 kDa polypeptide, PetD), cytochrome f and the Rieske protein, while the 4 small subunits are PetG, PetL, PetM and PetN. The complex functions as a dimer.

It localises to the plastid. Its subcellular location is the chloroplast thylakoid membrane. Its function is as follows. Component of the cytochrome b6-f complex, which mediates electron transfer between photosystem II (PSII) and photosystem I (PSI), cyclic electron flow around PSI, and state transitions. The sequence is that of Cytochrome b6-f complex subunit 7 from Phaeodactylum tricornutum (strain CCAP 1055/1).